Consider the following 940-residue polypeptide: Protein translocase subunit SecA (940 aa).

ATP-binding positions include Gln86, 104-108 (GEGKT), and Asp494. The disordered stretch occupies residues 884 to 940 (ATAKAQKDQQAEDAVLVGEDEPETPQGPPARGAFGQPTGASSAPQNREERRKADRRK). Positions 929–940 (NREERRKADRRK) are enriched in basic and acidic residues.

It belongs to the SecA family. Monomer and homodimer. Part of the essential Sec protein translocation apparatus which comprises SecA, SecYEG and auxiliary proteins SecDF. Other proteins may also be involved.

It is found in the cell membrane. The protein resides in the cytoplasm. The catalysed reaction is ATP + H2O + cellular proteinSide 1 = ADP + phosphate + cellular proteinSide 2.. Part of the Sec protein translocase complex. Interacts with the SecYEG preprotein conducting channel. Has a central role in coupling the hydrolysis of ATP to the transfer of proteins into and across the cell membrane, serving as an ATP-driven molecular motor driving the stepwise translocation of polypeptide chains across the membrane. The chain is Protein translocase subunit SecA from Clavibacter sepedonicus (Clavibacter michiganensis subsp. sepedonicus).